Consider the following 160-residue polypeptide: SsrA-binding protein (160 aa).

It belongs to the SmpB family.

The protein localises to the cytoplasm. Its function is as follows. Required for rescue of stalled ribosomes mediated by trans-translation. Binds to transfer-messenger RNA (tmRNA), required for stable association of tmRNA with ribosomes. tmRNA and SmpB together mimic tRNA shape, replacing the anticodon stem-loop with SmpB. tmRNA is encoded by the ssrA gene; the 2 termini fold to resemble tRNA(Ala) and it encodes a 'tag peptide', a short internal open reading frame. During trans-translation Ala-aminoacylated tmRNA acts like a tRNA, entering the A-site of stalled ribosomes, displacing the stalled mRNA. The ribosome then switches to translate the ORF on the tmRNA; the nascent peptide is terminated with the 'tag peptide' encoded by the tmRNA and targeted for degradation. The ribosome is freed to recommence translation, which seems to be the essential function of trans-translation. This Yersinia enterocolitica serotype O:8 / biotype 1B (strain NCTC 13174 / 8081) protein is SsrA-binding protein.